Consider the following 307-residue polypeptide: Thioredoxin reductase (307 aa).

36 to 43 lines the FAD pocket; it reads DNAAPGGK. Cys138 and Cys141 are disulfide-bonded. 278-287 contacts FAD; the sequence is DIRIKDIRQI.

It belongs to the class-II pyridine nucleotide-disulfide oxidoreductase family. As to quaternary structure, homodimer. It depends on FAD as a cofactor.

Its subcellular location is the cytoplasm. The enzyme catalyses [thioredoxin]-dithiol + NADP(+) = [thioredoxin]-disulfide + NADPH + H(+). This Mycoplasmopsis pulmonis (strain UAB CTIP) (Mycoplasma pulmonis) protein is Thioredoxin reductase (trxB).